The following is a 765-amino-acid chain: MTTVHNLGFPRIGAKRELKFACEAYWRGEIDQTQLDKTAHTLRANHWQTQLDAGVEWLPVGDFSYYDHVLDTSFLVGNIPVRAQADGQSKLDTYFKVARGTAKEAAGASCCGGSHAAEMTKWFDTNYHYLVPELNANTHFKLNASKLLTELEQARALTSKVKPVILGPLSYLWLAKITDGSTHKLGFLDDLITVYRELLGTLAKEAVEWVQFDEPILALDLPEQWQHAFERVYHQLQLPNLSVLLATYFGPLDTNLRLAARLPTAALHLDITRGGDDLPRVLDILSPHKILSVGVIDGRNIWKADLNKLLAQLKPVKERLGNGLWLAPSCSLLHTPVDLDSEEALDADIKNWLAFAKQKLQELNILQRALDNGETSVAEALVHNAGAIAARKASAKVNNAKVQSLVNNISPSLSERESPFATRIEKQQAKYNLPTLPTTTIGSFPQTSEIRKNRKAFKSGEISQQQYDRTLRAEIAHAIELQEKIGIDVLVHGEAERNDMVEYFGEQLDGYVFTQFGWVQSYGSRCVKPPIIFGDVSRPRKITVDWAEYAQSLTSKPVKGMLTGPITMLQWSFVRDDQPRKITAQQIALALRSEVNDLEAAGITIIQVDEPALREGLPLRKKDWQNYLDWAVEAFKISTAGVGDTTQIHTHMCYAEFNDIIQAIADLDADVITIETSRSNMELLSAFEQFNYPNDIGPGVYDIHSPNIPATEQVVGLIKKAAENLPLQRLWINPDCGLKTRKWEDVIPALENMVNAAKQLRAEVA.

Residues 16–19 (RELK) and lysine 121 each bind 5-methyltetrahydropteroyltri-L-glutamate. L-homocysteine-binding positions include 441 to 443 (IGS) and glutamate 494. L-methionine is bound by residues 441–443 (IGS) and glutamate 494. Residues 525 to 526 (RC) and tryptophan 571 contribute to the 5-methyltetrahydropteroyltri-L-glutamate site. Aspartate 609 contributes to the L-homocysteine binding site. Aspartate 609 provides a ligand contact to L-methionine. Position 615 (glutamate 615) interacts with 5-methyltetrahydropteroyltri-L-glutamate. Positions 651, 653, and 675 each coordinate Zn(2+). Histidine 704 functions as the Proton donor in the catalytic mechanism. Cysteine 736 serves as a coordination point for Zn(2+).

It belongs to the vitamin-B12 independent methionine synthase family. It depends on Zn(2+) as a cofactor.

It catalyses the reaction 5-methyltetrahydropteroyltri-L-glutamate + L-homocysteine = tetrahydropteroyltri-L-glutamate + L-methionine. It functions in the pathway amino-acid biosynthesis; L-methionine biosynthesis via de novo pathway; L-methionine from L-homocysteine (MetE route): step 1/1. In terms of biological role, catalyzes the transfer of a methyl group from 5-methyltetrahydrofolate to homocysteine resulting in methionine formation. This chain is 5-methyltetrahydropteroyltriglutamate--homocysteine methyltransferase, found in Saccharophagus degradans (strain 2-40 / ATCC 43961 / DSM 17024).